Reading from the N-terminus, the 328-residue chain is Palmitoyltransferase ZDHHC15A (328 aa).

Topologically, residues 1 to 14 (MLLPACLRRCARLL) are cytoplasmic. Residues 15–35 (FWIPVLVVIVVVMWSYYAYVV) form a helical membrane-spanning segment. At 36–48 (HFCWILLSSATQR) the chain is on the lumenal side. Residues 49-69 (VVFLCLFHLCFGMFSWSFWKA) traverse the membrane as a helical segment. At 70 to 166 (VSTPPSSPSV…NNCMGFSNYK (97 aa)) the chain is on the cytoplasmic side. Residues 123–173 (RFCHHCQLIKPDRCHHCSVCQTCVLKMDHHCLWLNNCMGFSNYKFFMLFLL) form the DHHC domain. The Zn(2+) site is built by Cys-125 and Cys-128. Lys-132 contributes to the substrate binding site. Zn(2+)-binding residues include His-138, Cys-139, Cys-142, Cys-145, and His-152. Cys-153 acts as the S-palmitoyl cysteine intermediate in catalysis. Residue Cys-159 participates in Zn(2+) binding. The helical transmembrane segment at 167–187 (FFMLFLLYSLLYCLLIVSTVT) threads the bilayer. The Lumenal portion of the chain corresponds to 188–206 (PTVIQLWRGRLFDSCVKLH). The helical transmembrane segment at 207–227 (VLFLTLVSAIFAITLCFLLIF) threads the bilayer. The Cytoplasmic segment spans residues 228–328 (HIWLLTSNKT…KEAAVTIAVD (101 aa)).

The protein belongs to the DHHC palmitoyltransferase family. In terms of processing, autopalmitoylated (in vitro).

It is found in the golgi apparatus membrane. It localises to the postsynaptic density. The catalysed reaction is L-cysteinyl-[protein] + hexadecanoyl-CoA = S-hexadecanoyl-L-cysteinyl-[protein] + CoA. It carries out the reaction L-cysteinyl-[protein] + tetradecanoyl-CoA = S-tetradecanoyl-L-cysteinyl-[protein] + CoA. It catalyses the reaction L-cysteinyl-[protein] + octadecanoyl-CoA = S-octadecanoyl-L-cysteinyl-[protein] + CoA. Its function is as follows. Palmitoyltransferase that catalyzes the addition of palmitate onto various protein substrates. Has no stringent fatty acid selectivity and in addition to palmitate can also transfer onto target proteins myristate from tetradecanoyl-CoA and stearate from octadecanoyl-CoA. May thereby regulate target proteins association and localization to membranes. The protein is Palmitoyltransferase ZDHHC15A (zdhhc15a) of Danio rerio (Zebrafish).